A 158-amino-acid polypeptide reads, in one-letter code: Transcription elongation factor GreA (158 aa).

Belongs to the GreA/GreB family.

Functionally, necessary for efficient RNA polymerase transcription elongation past template-encoded arresting sites. The arresting sites in DNA have the property of trapping a certain fraction of elongating RNA polymerases that pass through, resulting in locked ternary complexes. Cleavage of the nascent transcript by cleavage factors such as GreA or GreB allows the resumption of elongation from the new 3'terminus. GreA releases sequences of 2 to 3 nucleotides. The chain is Transcription elongation factor GreA from Zymomonas mobilis subsp. mobilis (strain ATCC 31821 / ZM4 / CP4).